The primary structure comprises 245 residues: Phycocyanobilin:ferredoxin oxidoreductase (245 aa).

The protein belongs to the HY2 family.

The enzyme catalyses (2R,3Z)-phycocyanobilin + 4 oxidized [2Fe-2S]-[ferredoxin] = biliverdin IXalpha + 4 reduced [2Fe-2S]-[ferredoxin] + 4 H(+). Catalyzes the four-electron reduction of biliverdin IX-alpha (2-electron reduction at both the A and D rings); the reaction proceeds via an isolatable 2-electron intermediate, 181,182-dihydrobiliverdin. The chain is Phycocyanobilin:ferredoxin oxidoreductase from Trichodesmium erythraeum (strain IMS101).